The primary structure comprises 268 residues: Malonyl-[acyl-carrier protein] O-methyltransferase 1 (268 aa).

This sequence belongs to the methyltransferase superfamily.

It catalyses the reaction malonyl-[ACP] + S-adenosyl-L-methionine = malonyl-[ACP] methyl ester + S-adenosyl-L-homocysteine. It functions in the pathway cofactor biosynthesis; biotin biosynthesis. Functionally, converts the free carboxyl group of a malonyl-thioester to its methyl ester by transfer of a methyl group from S-adenosyl-L-methionine (SAM). It allows to synthesize pimeloyl-ACP via the fatty acid synthetic pathway. The protein is Malonyl-[acyl-carrier protein] O-methyltransferase 1 of Ilyobacter polytropus (strain ATCC 51220 / DSM 2926 / LMG 16218 / CuHBu1).